Consider the following 442-residue polypeptide: MQRYISLSVSLSLLSGANALVRPDGVGRLPALGWNTWNAFGCDIDASKVLTAAEETINLGLKDAGYEYINIDDCWSVKSGRDPNTKRIIPDSAKFPDGISGVASKIHDLGLKVGIYSSAGTETCAGYPASLGYEKIDAESFAEWGIDYLKYDNCGVPTNWTDTYTHCVPDNSNGSKFPNGTCPDISNPAPTAYDWSSSNTAQRYNAMRDALLGVNRTILYSLCEWGQADVNTWGNGTGNSWRTTGDITPDWSRIVEIANENSFLMNYADFWGYPDPDMLEVGNGNLTLEENRAHFALWAAMKSPLIIGTALDSINEEHLAILKNKPLLSFHQDPVIGRPAYPYKWGYNPDWTFDPAHPAEYWSGPSSTLGGTLVLMFNSEDSAKHRTAVWSEIPELKDSAEKGSGYRVTEIWTGEDLGCVKDQYDVELQSHDIAALVVGESC.

Residues 1–19 (MQRYISLSVSLSLLSGANA) form the signal peptide. Disulfide bonds link Cys42/Cys74 and Cys124/Cys154. The active-site Nucleophile is Asp152. N-linked (GlcNAc...) asparagine glycosylation is found at Asn159, Asn173, Asn179, and Asn215. Substrate is bound at residue 224–228 (EWGQA). Residue Asn235 is glycosylated (N-linked (GlcNAc...) asparagine). The active-site Proton donor is Asp246. N-linked (GlcNAc...) asparagine glycosylation occurs at Asn285.

Belongs to the glycosyl hydrolase 27 family.

It localises to the secreted. The catalysed reaction is Hydrolysis of terminal, non-reducing alpha-D-galactose residues in alpha-D-galactosides, including galactose oligosaccharides, galactomannans and galactolipids.. Hydrolyzes a variety of simple alpha-D-galactoside as well as more complex molecules such as oligosaccharides and polysaccharides. The protein is Probable alpha-galactosidase B (aglB) of Aspergillus oryzae (strain ATCC 42149 / RIB 40) (Yellow koji mold).